Consider the following 682-residue polypeptide: Potassium-transporting ATPase ATP-binding subunit (682 aa).

4 helical membrane-spanning segments follow: residues 34 to 54 (PVMF…LAMV), 62 to 82 (ALFT…ANFA), 219 to 239 (IALT…TATL), and 254 to 274 (VLVA…LSAI). Catalysis depends on aspartate 307, which acts as the 4-aspartylphosphate intermediate. Residues aspartate 344, glutamate 348, 377–384 (FTAQSRMS), and lysine 395 each bind ATP. Residues aspartate 518 and aspartate 522 each contribute to the Mg(2+) site. The next 3 helical transmembrane spans lie at 588–608 (FAII…LNVM), 616–636 (AILS…PLAL), and 662–682 (LVVP…LGLA).

This sequence belongs to the cation transport ATPase (P-type) (TC 3.A.3) family. Type IA subfamily. The system is composed of three essential subunits: KdpA, KdpB and KdpC.

It is found in the cell inner membrane. It catalyses the reaction K(+)(out) + ATP + H2O = K(+)(in) + ADP + phosphate + H(+). Part of the high-affinity ATP-driven potassium transport (or Kdp) system, which catalyzes the hydrolysis of ATP coupled with the electrogenic transport of potassium into the cytoplasm. This subunit is responsible for energy coupling to the transport system and for the release of the potassium ions to the cytoplasm. This chain is Potassium-transporting ATPase ATP-binding subunit, found in Salmonella schwarzengrund (strain CVM19633).